A 382-amino-acid polypeptide reads, in one-letter code: Lipid-A-disaccharide synthase (382 aa).

It belongs to the LpxB family.

The enzyme catalyses a lipid X + a UDP-2-N,3-O-bis[(3R)-3-hydroxyacyl]-alpha-D-glucosamine = a lipid A disaccharide + UDP + H(+). It participates in bacterial outer membrane biogenesis; LPS lipid A biosynthesis. In terms of biological role, condensation of UDP-2,3-diacylglucosamine and 2,3-diacylglucosamine-1-phosphate to form lipid A disaccharide, a precursor of lipid A, a phosphorylated glycolipid that anchors the lipopolysaccharide to the outer membrane of the cell. This Koribacter versatilis (strain Ellin345) protein is Lipid-A-disaccharide synthase.